The following is a 203-amino-acid chain: Probable nicotinate-nucleotide adenylyltransferase (203 aa).

The protein belongs to the NadD family.

The enzyme catalyses nicotinate beta-D-ribonucleotide + ATP + H(+) = deamido-NAD(+) + diphosphate. Its pathway is cofactor biosynthesis; NAD(+) biosynthesis; deamido-NAD(+) from nicotinate D-ribonucleotide: step 1/1. In terms of biological role, catalyzes the reversible adenylation of nicotinate mononucleotide (NaMN) to nicotinic acid adenine dinucleotide (NaAD). The polypeptide is Probable nicotinate-nucleotide adenylyltransferase (Clostridium kluyveri (strain ATCC 8527 / DSM 555 / NBRC 12016 / NCIMB 10680 / K1)).